Reading from the N-terminus, the 436-residue chain is F-box/LRR-repeat protein At2g40920 (436 aa).

Residues 48-98 (EYLLQNFDLDHVMEILMRFPLTSLTRFKCVSKQWSSLISSRYFCNLLYTTV) enclose the F-box domain. LRR repeat units follow at residues 276–301 (NCVV…IHLD) and 393–416 (YYNL…WFDK).

The polypeptide is F-box/LRR-repeat protein At2g40920 (Arabidopsis thaliana (Mouse-ear cress)).